The chain runs to 969 residues: Leucine--tRNA ligase (969 aa).

Residues Pro-45 to His-55 carry the 'HIGH' region motif. The 'KMSKS' region signature appears at Lys-649–Ser-653. An ATP-binding site is contributed by Lys-652.

Belongs to the class-I aminoacyl-tRNA synthetase family.

The protein localises to the cytoplasm. The enzyme catalyses tRNA(Leu) + L-leucine + ATP = L-leucyl-tRNA(Leu) + AMP + diphosphate. The polypeptide is Leucine--tRNA ligase (Staphylothermus marinus (strain ATCC 43588 / DSM 3639 / JCM 9404 / F1)).